A 156-amino-acid chain; its full sequence is Endoribonuclease YbeY (156 aa).

His122, His126, and His132 together coordinate Zn(2+).

Belongs to the endoribonuclease YbeY family. Requires Zn(2+) as cofactor.

The protein resides in the cytoplasm. Single strand-specific metallo-endoribonuclease involved in late-stage 70S ribosome quality control and in maturation of the 3' terminus of the 16S rRNA. In Bacillus cereus (strain B4264), this protein is Endoribonuclease YbeY.